The sequence spans 459 residues: Cysteine--tRNA ligase (459 aa).

Cysteine 28 provides a ligand contact to Zn(2+). The 'HIGH' region motif lies at 30–40 (VTVYDLCHFGH). Positions 209, 234, and 238 each coordinate Zn(2+). A 'KMSKS' region motif is present at residues 266–270 (KMSKS). Lysine 269 is a binding site for ATP.

It belongs to the class-I aminoacyl-tRNA synthetase family. In terms of assembly, monomer. Zn(2+) serves as cofactor.

It localises to the cytoplasm. It catalyses the reaction tRNA(Cys) + L-cysteine + ATP = L-cysteinyl-tRNA(Cys) + AMP + diphosphate. The polypeptide is Cysteine--tRNA ligase (Actinobacillus pleuropneumoniae serotype 5b (strain L20)).